We begin with the raw amino-acid sequence, 76 residues long: uORF2 protein (76 aa).

Its function is as follows. Plays a role in viral replication. This chain is uORF2 protein, found in Zika virus (isolate ZIKV/Human/French Polynesia/10087PF/2013) (ZIKV).